Reading from the N-terminus, the 1019-residue chain is Katanin p80 WD40 repeat-containing subunit B1 homolog KTN80.1 (1019 aa).

WD repeat units follow at residues 13–53 (AHSG…SPMS), 56–95 (GHTSPVDSVAFNSEEVLVLAGASSGVIKLWDLEESKMVRA), 98–137 (GHRSNCSAVEFHPFGEFLASGSSDTNLRVWDTRKKGCIQT), 140–181 (GHTR…HEFK), 183–221 (HEGPIRSLDFHPLEFLLATGSADRTVKFWDLETFELIGT), 224–264 (PEAT…DGVD), and 266–303 (GWSTLGDFCINEGKFIGCSYYRNSVGIWVSDISELEPY). The DWD box motif lies at 114–130 (FLASGSSDTNLRVWDTR). Disordered regions lie at residues 388–424 (FGPAGDKYSSTSRDSDSGEESSYSERESIPFSRTKSG), 455–474 (KSGLAVEEEPQTQNAFLSEQ), 517–581 (IHRS…GSRE), and 607–652 (RGEK…RARS). Polar residues predominate over residues 465 to 474 (QTQNAFLSEQ). The span at 553 to 572 (IPSKTERVLSREKPGDEQKN) shows a compositional bias: basic and acidic residues. Residues 614–628 (TEGASTTIEQNNNAV) are compositionally biased toward polar residues.

Belongs to the WD repeat KATNB1 family. In terms of assembly, component of KTN80-KTN1 complexes composed of a hexamer of KTN1-KTN80 heterodimers that sense microtubule (MT) geometry to confer precise MT severing. Interacts directly with AAA1/KTN1 and KTN80.3, and weakly with KTN80.4. In terms of tissue distribution, expressed at low levels in siliques, flowers, leaves, stems and roots.

It localises to the cytoplasm. Its subcellular location is the cytoskeleton. May participate in a complex which severs microtubules in an ATP-dependent manner. Microtubule severing may promote rapid reorganization of cellular microtubule arrays. Confers precision to microtubule (MT) severing by specific targeting of KTN1 to MT cleavage sites such as crossover or branching nucleation sites. Together with other KTN80s, regulates cell elongation by modulating MT organization. This is Katanin p80 WD40 repeat-containing subunit B1 homolog KTN80.1 from Arabidopsis thaliana (Mouse-ear cress).